A 185-amino-acid chain; its full sequence is Threonylcarbamoyl-AMP synthase (185 aa).

The YrdC-like domain maps to 4-185 (SWRVQQAARE…LATGEVVRPG (182 aa)).

This sequence belongs to the SUA5 family. TsaC subfamily.

The protein localises to the cytoplasm. The enzyme catalyses L-threonine + hydrogencarbonate + ATP = L-threonylcarbamoyladenylate + diphosphate + H2O. Required for the formation of a threonylcarbamoyl group on adenosine at position 37 (t(6)A37) in tRNAs that read codons beginning with adenine. Catalyzes the conversion of L-threonine, HCO(3)(-)/CO(2) and ATP to give threonylcarbamoyl-AMP (TC-AMP) as the acyladenylate intermediate, with the release of diphosphate. This is Threonylcarbamoyl-AMP synthase from Pseudomonas entomophila (strain L48).